Here is a 699-residue protein sequence, read N- to C-terminus: Elongation factor G 1 (699 aa).

The tr-type G domain maps to 8–290 (EHYRNIGICA…AVIEFLPSPS (283 aa)). Residues 17 to 24 (AHVDAGKT), 88 to 92 (DTPGH), and 142 to 145 (NKMD) contribute to the GTP site.

The protein belongs to the TRAFAC class translation factor GTPase superfamily. Classic translation factor GTPase family. EF-G/EF-2 subfamily.

The protein resides in the cytoplasm. Catalyzes the GTP-dependent ribosomal translocation step during translation elongation. During this step, the ribosome changes from the pre-translocational (PRE) to the post-translocational (POST) state as the newly formed A-site-bound peptidyl-tRNA and P-site-bound deacylated tRNA move to the P and E sites, respectively. Catalyzes the coordinated movement of the two tRNA molecules, the mRNA and conformational changes in the ribosome. This is Elongation factor G 1 from Vibrio parahaemolyticus serotype O3:K6 (strain RIMD 2210633).